We begin with the raw amino-acid sequence, 121 residues long: Large ribosomal subunit protein uL22 (121 aa).

It belongs to the universal ribosomal protein uL22 family. As to quaternary structure, part of the 50S ribosomal subunit.

This protein binds specifically to 23S rRNA; its binding is stimulated by other ribosomal proteins, e.g. L4, L17, and L20. It is important during the early stages of 50S assembly. It makes multiple contacts with different domains of the 23S rRNA in the assembled 50S subunit and ribosome. In terms of biological role, the globular domain of the protein is located near the polypeptide exit tunnel on the outside of the subunit, while an extended beta-hairpin is found that lines the wall of the exit tunnel in the center of the 70S ribosome. The sequence is that of Large ribosomal subunit protein uL22 from Kocuria rhizophila (strain ATCC 9341 / DSM 348 / NBRC 103217 / DC2201).